The sequence spans 477 residues: Endo-1,4-beta-xylanase A (477 aa).

The signal sequence occupies residues 1–41; sequence MGSYALPRSGVRRSIRVLLLALVVGVLGTATALIAPPGAHA. The 299-residue stretch at 42–340 folds into the GH10 domain; sequence AESTLGAAAA…KAAYTAVLDA (299 aa). Glutamate 169 functions as the Proton donor in the catalytic mechanism. Residue glutamate 277 is the Nucleophile of the active site. The Ricin B-type lectin domain maps to 361-477; it reads SGRCLDVPDA…NGSNQRWTRT (117 aa). 3 disulfide bridges follow: cysteine 364-cysteine 383, cysteine 406-cysteine 423, and cysteine 447-cysteine 466.

Belongs to the glycosyl hydrolase 10 (cellulase F) family.

The protein resides in the secreted. The enzyme catalyses Endohydrolysis of (1-&gt;4)-beta-D-xylosidic linkages in xylans.. The protein operates within glycan degradation; xylan degradation. In terms of biological role, contributes to hydrolyze hemicellulose, the major component of plant cell-walls. XLNA and XLNB seem to act sequentially on the substrate to yield xylobiose and xylose as carbon sources. This Streptomyces lividans protein is Endo-1,4-beta-xylanase A (xlnA).